The primary structure comprises 465 residues: Phosphomethylpyrimidine synthase (465 aa).

Substrate-binding positions include Asn80, Met109, Tyr139, His175, 195–197 (SRG), 236–239 (DSLR), and Glu275. Residue His279 coordinates Zn(2+). Tyr302 provides a ligand contact to substrate. His343 contacts Zn(2+). The [4Fe-4S] cluster site is built by Cys423, Cys426, and Cys431.

It belongs to the ThiC family. Requires [4Fe-4S] cluster as cofactor.

The enzyme catalyses 5-amino-1-(5-phospho-beta-D-ribosyl)imidazole + S-adenosyl-L-methionine = 4-amino-2-methyl-5-(phosphooxymethyl)pyrimidine + CO + 5'-deoxyadenosine + formate + L-methionine + 3 H(+). It participates in cofactor biosynthesis; thiamine diphosphate biosynthesis. Functionally, catalyzes the synthesis of the hydroxymethylpyrimidine phosphate (HMP-P) moiety of thiamine from aminoimidazole ribotide (AIR) in a radical S-adenosyl-L-methionine (SAM)-dependent reaction. The sequence is that of Phosphomethylpyrimidine synthase from Synechococcus sp. (strain CC9311).